The primary structure comprises 476 residues: Angiotensinogen (476 aa).

Residues 1–24 (MAPAGLSLGAAILCLLAWAGLAAG) form the signal peptide. A disulfide bond links C42 and C161. N295, N319, N362, and N401 each carry an N-linked (GlcNAc...) asparagine glycan.

The protein belongs to the serpin family. In terms of processing, in response to low blood pressure, the enzyme renin/REN cleaves angiotensinogen to produce angiotensin-1. Angiotensin-1 is a substrate of ACE (angiotensin converting enzyme) that removes a dipeptide to yield the physiologically active peptide angiotensin-2. Angiotensin-1 and angiotensin-2 can be further processed to generate angiotensin-3, angiotensin-4. Angiotensin 1-9 is cleaved from angiotensin-1 by ACE2 and can be further processed by ACE to produce angiotensin 1-7, angiotensin 1-5 and angiotensin 1-4. Angiotensin 1-7 has also been proposed to be cleaved from angiotensin-2 by ACE2 or from angiotensin-1 by MME (neprilysin). The disulfide bond is labile. Angiotensinogen is present in the circulation in a near 40:60 ratio with the oxidized disulfide-bonded form, which preferentially interacts with receptor-bound renin.

The protein resides in the secreted. Functionally, essential component of the renin-angiotensin system (RAS), a potent regulator of blood pressure, body fluid and electrolyte homeostasis. Acts directly on vascular smooth muscle as a potent vasoconstrictor, affects cardiac contractility and heart rate through its action on the sympathetic nervous system, and alters renal sodium and water absorption through its ability to stimulate the zona glomerulosa cells of the adrenal cortex to synthesize and secrete aldosterone. Acts by binding to angiotensin receptors AGTR1 and AGTR2. Also binds the DEAR/FBXW7-AS1 receptor. Its function is as follows. Stimulates aldosterone release. In terms of biological role, is a ligand for the G-protein coupled receptor MAS1. Has vasodilator and antidiuretic effects. Has an antithrombotic effect that involves MAS1-mediated release of nitric oxide from platelets. This chain is Angiotensinogen (AGT), found in Bos taurus (Bovine).